Reading from the N-terminus, the 507-residue chain is Congo red hypersensitive protein 1 (507 aa).

Residues 1–22 (MKVLDLLTVLSASSLLSTFAAA) form the signal peptide. A GH16 domain is found at 34-260 (ASSTASCNPL…KVIVTDYSTG (227 aa)). A disulfide bond links Cys40 and Cys48. N-linked (GlcNAc...) asparagine glycosylation is present at Asn117. Residue Glu134 is the Nucleophile of the active site. Glu138 functions as the Proton donor in the catalytic mechanism. Glu138 is a binding site for chitin. 2 N-linked (GlcNAc...) asparagine glycosylation sites follow: Asn177 and Asn201. 2 residues coordinate chitin: Trp219 and Thr230. Disordered regions lie at residues 329–368 (SSSASSTVSSSVSSTVSSSSSVSSSSSTSPSSSTATSSKT) and 381–478 (SSFE…TNSV). 2 stretches are compositionally biased toward low complexity: residues 381-439 (SSFE…PVQD) and 451-477 (TSSTTQISSKYTSTIQSSSSEASSTNS). Asn482 is lipidated: GPI-anchor amidated asparagine. The propeptide at 483–507 (GADLAQSLPREGKLFSVLVALLALL) is removed in mature form.

It belongs to the glycosyl hydrolase 16 family. CRH1 subfamily. The GPI-anchor is attached to the protein in the endoplasmic reticulum and serves to target the protein to the cell surface. There, the glucosamine-inositol phospholipid moiety is cleaved off and the GPI-modified mannoprotein is covalently attached via its lipidless GPI glycan remnant to the 1,6-beta-glucan of the outer cell wall layer.

The protein localises to the secreted. Its subcellular location is the cell wall. It is found in the membrane. It catalyses the reaction Random endo-hydrolysis of N-acetyl-beta-D-glucosaminide (1-&gt;4)-beta-linkages in chitin and chitodextrins.. Dual chitinase/transglycosylase that plays a role in cell wall architecture. Chitinase and transglycosylase activities are coupled. Required for the polysaccharide cross-linking at the septa and the cell wall. More specifically, transfers chitin to both beta(1-3)- and beta(1-6)glucan in the cell wall. The minimal number of intact hexopyranose units required in the molecule of the acceptor oligosaccharide is two and the effectivity of the acceptor increased with the increasing length of its oligosaccharide chain. The protein is Congo red hypersensitive protein 1 of Saccharomyces cerevisiae (strain ATCC 204508 / S288c) (Baker's yeast).